The following is an 86-amino-acid chain: Small ribosomal subunit protein uS17 (86 aa).

It belongs to the universal ribosomal protein uS17 family. In terms of assembly, part of the 30S ribosomal subunit.

One of the primary rRNA binding proteins, it binds specifically to the 5'-end of 16S ribosomal RNA. The chain is Small ribosomal subunit protein uS17 from Halorhodospira halophila (strain DSM 244 / SL1) (Ectothiorhodospira halophila (strain DSM 244 / SL1)).